We begin with the raw amino-acid sequence, 409 residues long: Gamma-glutamyl phosphate reductase (409 aa).

The protein belongs to the gamma-glutamyl phosphate reductase family.

It is found in the cytoplasm. It carries out the reaction L-glutamate 5-semialdehyde + phosphate + NADP(+) = L-glutamyl 5-phosphate + NADPH + H(+). Its pathway is amino-acid biosynthesis; L-proline biosynthesis; L-glutamate 5-semialdehyde from L-glutamate: step 2/2. Its function is as follows. Catalyzes the NADPH-dependent reduction of L-glutamate 5-phosphate into L-glutamate 5-semialdehyde and phosphate. The product spontaneously undergoes cyclization to form 1-pyrroline-5-carboxylate. The sequence is that of Gamma-glutamyl phosphate reductase from Bartonella tribocorum (strain CIP 105476 / IBS 506).